The sequence spans 610 residues: Threonine--tRNA ligase (610 aa).

The interval 1–29 (MANHDQQTVSSAAATTSASPSPVVLPKTS) is disordered. Positions 8-24 (TVSSAAATTSASPSPVV) are enriched in low complexity. The catalytic stretch occupies residues 209-502 (DHRRIGKDLD…MTENYAGDYP (294 aa)). 3 residues coordinate Zn(2+): Cys-302, His-353, and His-479.

The protein belongs to the class-II aminoacyl-tRNA synthetase family. In terms of assembly, homodimer. Requires Zn(2+) as cofactor.

The protein resides in the cytoplasm. The catalysed reaction is tRNA(Thr) + L-threonine + ATP = L-threonyl-tRNA(Thr) + AMP + diphosphate + H(+). Catalyzes the attachment of threonine to tRNA(Thr) in a two-step reaction: L-threonine is first activated by ATP to form Thr-AMP and then transferred to the acceptor end of tRNA(Thr). Also edits incorrectly charged L-seryl-tRNA(Thr). This chain is Threonine--tRNA ligase, found in Synechococcus sp. (strain WH7803).